The sequence spans 352 residues: tRNA (guanine-N(1)-)-methyltransferase (352 aa).

Residues Gly109 and 129–134 (IGDYVL) each bind S-adenosyl-L-methionine.

The protein belongs to the RNA methyltransferase TrmD family. In terms of assembly, homodimer.

The protein localises to the cytoplasm. It carries out the reaction guanosine(37) in tRNA + S-adenosyl-L-methionine = N(1)-methylguanosine(37) in tRNA + S-adenosyl-L-homocysteine + H(+). Its function is as follows. Specifically methylates guanosine-37 in various tRNAs. This Chlamydia trachomatis serovar L2 (strain ATCC VR-902B / DSM 19102 / 434/Bu) protein is tRNA (guanine-N(1)-)-methyltransferase.